A 98-amino-acid polypeptide reads, in one-letter code: DNA-binding protein Fis (98 aa).

The segment at residues 74-93 is a DNA-binding region (H-T-H motif); the sequence is QTRAAQMMGINRGTLRKKLK.

The protein belongs to the transcriptional regulatory Fis family. As to quaternary structure, homodimer.

Activates ribosomal RNA transcription. Plays a direct role in upstream activation of rRNA promoters. This is DNA-binding protein Fis from Sodalis glossinidius (strain morsitans).